The primary structure comprises 284 residues: Formamidopyrimidine-DNA glycosylase (284 aa).

Residue proline 2 is the Schiff-base intermediate with DNA of the active site. Glutamate 3 serves as the catalytic Proton donor. The Proton donor; for beta-elimination activity role is filled by lysine 58. Residues histidine 97, arginine 120, and arginine 165 each contribute to the DNA site. Residues phenylalanine 250 to histidine 284 form an FPG-type zinc finger. Catalysis depends on arginine 274, which acts as the Proton donor; for delta-elimination activity.

This sequence belongs to the FPG family. As to quaternary structure, monomer. It depends on Zn(2+) as a cofactor.

The catalysed reaction is Hydrolysis of DNA containing ring-opened 7-methylguanine residues, releasing 2,6-diamino-4-hydroxy-5-(N-methyl)formamidopyrimidine.. The enzyme catalyses 2'-deoxyribonucleotide-(2'-deoxyribose 5'-phosphate)-2'-deoxyribonucleotide-DNA = a 3'-end 2'-deoxyribonucleotide-(2,3-dehydro-2,3-deoxyribose 5'-phosphate)-DNA + a 5'-end 5'-phospho-2'-deoxyribonucleoside-DNA + H(+). Functionally, involved in base excision repair of DNA damaged by oxidation or by mutagenic agents. Acts as a DNA glycosylase that recognizes and removes damaged bases. Has a preference for oxidized purines, such as 7,8-dihydro-8-oxoguanine (8-oxoG). Has AP (apurinic/apyrimidinic) lyase activity and introduces nicks in the DNA strand. Cleaves the DNA backbone by beta-delta elimination to generate a single-strand break at the site of the removed base with both 3'- and 5'-phosphates. In Cupriavidus pinatubonensis (strain JMP 134 / LMG 1197) (Cupriavidus necator (strain JMP 134)), this protein is Formamidopyrimidine-DNA glycosylase.